We begin with the raw amino-acid sequence, 205 residues long: High frequency lysogenization protein HflD homolog (205 aa).

The protein belongs to the HflD family.

It is found in the cytoplasm. The protein localises to the cell inner membrane. This Haemophilus influenzae (strain 86-028NP) protein is High frequency lysogenization protein HflD homolog.